The sequence spans 533 residues: (E)-beta-farnesene synthase (533 aa).

The Mg(2+) site is built by D286 and D290. Residues D286, D290, R427, and N430 each contribute to the substrate site. The DDXXD motif signature appears at 286 to 290 (DDMMD). Mg(2+) is bound by residues N430 and E438.

It belongs to the terpene synthase family. Monomer. Mg(2+) is required as a cofactor. Requires Mn(2+) as cofactor.

It localises to the cytoplasm. The enzyme catalyses (2E,6E)-farnesyl diphosphate = (E)-beta-farnesene + diphosphate. It carries out the reaction (2E,6E)-farnesyl diphosphate = alpha-copaene + diphosphate. The catalysed reaction is (2E,6E)-farnesyl diphosphate = (1S,5S,6R)-alpha-bergamotene + diphosphate. It catalyses the reaction (2E,6E)-farnesyl diphosphate = (-)-(E)-beta-caryophyllene + diphosphate. The enzyme catalyses (2E,6E)-farnesyl diphosphate = delta-cadinene + diphosphate. It carries out the reaction (2E,6E)-farnesyl diphosphate = (+)-germacrene D + diphosphate. The catalysed reaction is (2E,6E)-farnesyl diphosphate = alpha-zingiberene + diphosphate. It catalyses the reaction (2E,6E)-farnesyl diphosphate = alpha-muurolene + diphosphate. The enzyme catalyses (2E,6E)-farnesyl diphosphate = (S)-beta-bisabolene + diphosphate. It carries out the reaction (2E,6E)-farnesyl diphosphate = beta-sesquiphellandrene + diphosphate. The catalysed reaction is (2E,6E)-farnesyl diphosphate = sesquisabinene A + diphosphate. The protein operates within secondary metabolite biosynthesis; terpenoid biosynthesis. Functionally, sesquiterpene cyclase catalyzing mainly the production of beta-farnesene and alpha-bergamotene in equal amounts from farnesyl diphosphate. Also mediates the biosynthesis of minor sesquiterpene hydrocarbons including alpha-muurolene, beta-bisabolene, zingiberene, sesquiphellandrene, sesquisabinene A, germacrene D, delta-cadinene, alpha-copaene and (E)-beta-caryophyllene. Involved in indirect defense by producing volatile signals attracting natural enemies of herbivores. The sequence is that of (E)-beta-farnesene synthase from Zea mays (Maize).